The sequence spans 71 residues: Small ribosomal subunit protein bS21 (71 aa).

It belongs to the bacterial ribosomal protein bS21 family.

This Chromohalobacter salexigens (strain ATCC BAA-138 / DSM 3043 / CIP 106854 / NCIMB 13768 / 1H11) protein is Small ribosomal subunit protein bS21.